A 787-amino-acid chain; its full sequence is Alpha-glucosidase 2 (787 aa).

Active-site residues include Asp-407 and Glu-410. The active-site Proton donor is Asp-484.

Belongs to the glycosyl hydrolase 31 family. In terms of assembly, homohexamer.

It catalyses the reaction Hydrolysis of terminal, non-reducing (1-&gt;4)-linked alpha-D-glucose residues with release of alpha-D-glucose.. The polypeptide is Alpha-glucosidase 2 (Bacillus thermoamyloliquefaciens).